The following is a 546-amino-acid chain: Probable sucrose-6-phosphate hydrolase (546 aa).

Substrate-binding positions include 105-108, glutamine 124, 167-168, 228-229, and glutamate 283; these read LLND, FS, and RD. Aspartate 108 is a catalytic residue.

This sequence belongs to the glycosyl hydrolase 32 family.

It is found in the cytoplasm. The catalysed reaction is Hydrolysis of terminal non-reducing beta-D-fructofuranoside residues in beta-D-fructofuranosides.. The protein operates within glycan biosynthesis; sucrose metabolism. Enables the bacterium to metabolize sucrose as a sole carbon source. This is Probable sucrose-6-phosphate hydrolase (cscA) from Vibrio cholerae serotype O1 (strain ATCC 39541 / Classical Ogawa 395 / O395).